The following is a 449-amino-acid chain: Putative cytochrome P450 135A1 (449 aa).

Cys383 contacts heme.

The protein belongs to the cytochrome P450 family. It depends on heme as a cofactor.

This chain is Putative cytochrome P450 135A1 (cyp135A1), found in Mycobacterium tuberculosis (strain CDC 1551 / Oshkosh).